We begin with the raw amino-acid sequence, 287 residues long: Ribosomal RNA-processing protein 8 (287 aa).

Positions 1-62 (MTTEENKTSR…SAPSKRPKPS (62 aa)) are disordered. Residues 9–21 (SRNRKRKRQRNPK) are compositionally biased toward basic residues. Basic and acidic residues predominate over residues 35-46 (QNEKKNQRDTKN). S-adenosyl-L-methionine is bound by residues His-107, Gly-142, Asp-160, Asp-172, Met-173, and Cys-189.

It belongs to the methyltransferase superfamily. RRP8 family.

It is found in the nucleus. The protein localises to the nucleolus. Functionally, probable methyltransferase required to silence rDNA. The polypeptide is Ribosomal RNA-processing protein 8 (Arabidopsis thaliana (Mouse-ear cress)).